A 211-amino-acid polypeptide reads, in one-letter code: uncharacterized protein (211 aa).

The tract at residues 1–43 is disordered; that stretch reads MRPEVGREPAALQPRQRPRSDHQLHRSPFTVPPRTPACRSPGP.

This is an uncharacterized protein from Homo sapiens (Human).